A 243-amino-acid chain; its full sequence is tRNA pseudouridine synthase A (243 aa).

Asp54 serves as the catalytic Nucleophile. Tyr112 serves as a coordination point for substrate.

This sequence belongs to the tRNA pseudouridine synthase TruA family. Homodimer.

The enzyme catalyses uridine(38/39/40) in tRNA = pseudouridine(38/39/40) in tRNA. Formation of pseudouridine at positions 38, 39 and 40 in the anticodon stem and loop of transfer RNAs. This Aster yellows witches'-broom phytoplasma (strain AYWB) protein is tRNA pseudouridine synthase A.